Consider the following 124-residue polypeptide: Cholera enterotoxin subunit B (124 aa).

The N-terminal stretch at 1–21 (MIKLKFGVFFTVLLSSAYAHG) is a signal peptide. Cys30 and Cys107 are disulfide-bonded.

As to quaternary structure, the holotoxin (choleragen) consists of a pentameric ring of B subunits whose central pore is occupied by the A subunit. The A subunit contains two chains, A1 and A2, linked by a disulfide bridge.

Its subcellular location is the secreted. It localises to the host cell membrane. Functionally, the B subunit pentameric ring directs the A subunit to its target by binding to the GM1 gangliosides present on the surface of the intestinal epithelial cells. It can bind five GM1 gangliosides. It has no toxic activity by itself. The sequence is that of Cholera enterotoxin subunit B (ctxB) from Vibrio cholerae serotype O1 (strain ATCC 39315 / El Tor Inaba N16961).